We begin with the raw amino-acid sequence, 131 residues long: UPF0102 protein YraN (131 aa).

Over residues 1-19 (MATVPTRSGSPRQLTTKQT) the composition is skewed to polar residues. Positions 1–21 (MATVPTRSGSPRQLTTKQTGD) are disordered.

The protein belongs to the UPF0102 family.

In Escherichia coli O45:K1 (strain S88 / ExPEC), this protein is UPF0102 protein YraN.